A 60-amino-acid chain; its full sequence is Cytotoxin 1 (60 aa).

Intrachain disulfides connect Cys3–Cys21, Cys14–Cys38, Cys42–Cys53, and Cys54–Cys59.

Belongs to the three-finger toxin family. Short-chain subfamily. Type IA cytotoxin sub-subfamily. As to quaternary structure, monomer in solution; Homodimer and oligomer in the presence of negatively charged lipids forming a pore with a size ranging between 20 and 30 angstroms. As to expression, expressed by the venom gland.

The protein resides in the secreted. It is found in the target cell membrane. Its function is as follows. Basic protein that binds to cell membrane and depolarizes cardiomyocytes. This cytotoxin also possesses lytic activity on many other cells, including red blood cells. Interaction with sulfatides in the cell membrane induces pore formation and cell internalization and is responsible for cytotoxicity in cardiomyocytes. It targets the mitochondrial membrane and induces mitochondrial swelling and fragmentation. Inhibits protein kinases C. It binds to the integrin alpha-V/beta-3 with a moderate affinity. This chain is Cytotoxin 1, found in Naja pallida (Red spitting cobra).